The following is a 18562-amino-acid chain: MEGNEKKGGGLPPTQQRHLNIDTTVGGSISQPVSPSMSYSTDRETVMRSASGHATVAETHLIRSIGSQSQSYTEEHWSSEITSFVALAPPKFIQVIKAYRVHSTDTISLVVEVASDPPAIFEWFYNEKSVLQDRDRFQVGHGINISRLKVSRPEQGVYKCVTRNPAGVSTSYGYITVNADREHLSSSKEDMRLQRQHSVTYHQAPRFLTQVPNLFVTAGSNVIIDVEVDANPPARFSWFVNGKEYRDSIHGVEMFSPDVNRSVVRFSIPVAGEYKVVASNVHGSAMSCGHVDIQKVIELEESTLTTSTTAFDPMTTSMRALGNNGRNSRQAVNMFELNYTQRSSSVPRGVRHLESHIEVSNMTGEEKKTQQQTRTDAASIVESRFHPQPPKPPRAGTSRRFLPEPPKFVTTLPSVITVNAEEKLVLSVDVQAIPAAEFAWHVNGFEVKKSQSVVLLDEHNKSTLVLHPPVKQGKYKVTARNDVGSDSVTTQVTRIGEVKDGAGSEPPDIVESAVTVTCSHEEDVGSHSSLQTVRRIQEMQEEDEVDPIKPFIEATSPKVKESVEHPFANILNPKKREERLSPSGKGKHLLFAPRITAHPSESVFKILDGSPLKLRVMASSLPPATFLWMLNNFELRSNQNVTIRNDEENSSEIEFQKAPNGNVTVSAKNHLGEDRWTGKVILQYESPPPGQKITTIEKVTESWTLEEAVITQVVPTAADPGDRIVIIVRFDENKTSNCQFNWTINGVNIEKLEENLVAVESTEFESSLIVEKLEEQLCGEVVCVVKNQHGEVFSSSAHLRIRDDDSSFEIVPPNLPEECAPKIVEPLHSASFLDGQAMSLRCKITANPSAAVVWSKDDVNVEDWVLNKDVTTTVLDGGVCELLNPECFAEDAGLYKCTATNPHGTAETAAFINVEGAEYIKDHEEAEISESVLTDDVHIILPPKFIETLTAETDNFQQLGYVRMVATVRSVAPITVSWQKDGMDIYENEKYEVMQFADGAQILTIRAPTNLDSGVYTCTAESEHGVSNSSCQVELTISAESSPESFEKVEITPPEEVKETGIDDDIEVILKEEVSGTAQIEKREEEFKLLVKVADQVASTLVANVFLEAVHEAVKKIVETEDEEEDNQIEATQEPRFETSTDEYHVKENGTIKMAATISGHPTPFLEWYFGEEKLQVSQNVSMYYEAGTSAIILKNVQKRQGGNYFLRAHNCHGESILPMKLTVDPIEAVTHVLETSIPKVVVEQDAKEEEVRRAAEIISEQFAQLWVQDAQTEAVSAQAHQTPVVAEQASEEPTLPEVVAALQEQKPSVEKAPQPQFEVLETEDQDVVEQMQKQLPPVQKSMSVQEEKASSQRTPSPMNYEDKVKTIQSNLLRVNSHEAMEPIEATNLLLNTALQLKNEHVCDETTTVIVTQQPQKYDQLVTVVESNIEYHALRLSTSSSSPLKFIDLETIIQKPSTSCESIDRMFVEKSKRTANAQHRIVVLQGMSNTFHNAITWSLKKVKKLVGDAEAKAYADVEVVKQDETNEQVMTIIDNDTIVPQLLQVAAAANKLKLENVSVALIKEGDRAHQELVIEYESSIDEPMFEPVHNTSHLTFHQQQPTGPDQHVWSRRSKFEEDEAHVVAVFVEVDANCPDQSVEIVATVNAAYEGDNRQGIEDEPFTEVSQSLATESSAAPQAPKFLRKLVNCFGRIGEPVQLKCLIAGMPQPEIEWTVDGDPIVPNDEYSIVYEDGVCILRIESTLIEDEGEYCCTASNVAGTTFSKCYLKLSEADDDAVDLLRQLSEIKIIDPTLSTGYPMSMISDEENTSHQLLSNVLLTDKEVPITATYNEDLSRAESFRRFFESAETTVKVTELYQGESVEAQFQQPEKREQVSTSNTDVMFVNQKVDVMESTVSTVGNAVRQSVSSSTNSWDYMFNDPFPESQEINVIENELYEPRVPLLPQKLSYKGQEIFANTNTVERNSKAGAKAKGEVENLKKCVETLLLFDAEMDMKDIKESSPKKEIISKKDQQSLDDQIKVTQQILKDVERDLNKMERTSPGKSLSPNKRTFAPKDVEDIEAAIFSISDQLADRQSSEEALREALQEMILSNSSPMKELSRNNETSKPEVLKSEIQKIPEVETKISEVYPIVKLKQAISAIENSLLEDTEVTEIMKRKGSDKDKRKATRIKRVPSAHSARITPITSNLRDRLNQLHQLTVSEDSGSLKQNEEAKEIQELFVKIEKEINTIAELCKEKMTKKGADTVTHVLNSVLQHVASIINVILVAQDHQPIEVHAETTKTAEVSVWYSFDVHPESEDIIGIVDEEPTNRRPSSTPRGSTRSSNLTTSQDSQATTKMTVSSEDTIEAPIAPPRKGRSLSRDAERLLEIQPRAPPRRSRQSGDTLSPEPTPVLTLVKSDETPAPVRPPRSRSRHSGDELAETSPEAQPIRPPRSHSRHSGDELEEVQPVRPPRSKSKTADANCLQIESMDESQYSLSCIHIQKTNFAFTNSTHETSNASVVVDLRNMAQLECTVQSLDDLASIQMLCEESDYPSDTDRSLLLAGTVRYFNRASPSLHEVSPSLNMESVSMDLKPETEPEEIVQDVYVNVELHSVPSLSSLVEVNPNTLMQTLASEKSSLKAAEEDEKEGEEEGEEEVTADVSFIGRSVLSTETLDVVLEEKDMSQMNSTLPLDYERAFSSNTIRETDILSDESITVDSSYHKSPEPTVDFARSQVKSEEVTENFSLIHKPARRRVTGIVVNSLIYTIAANIAEDNTFDVDVVQEPQRYNISIKVIEDIVDFTSLTIMSDCEDDPPADVLVLKQDTSKLQALSYDDISVATTRTGITVSIVARSLNDGIYASLEEIAWGEVEMTVPDIMQMSTEEKSSLQFNVTVSESNLEEAKSLKSQVSFRSSQNSVSEMDNTISSTATISIPSYVVKLESTATITCELNNYLPKNCTIDWYCGKTKIIIDHEQFDRISHDLLEVLIIRSVEAINGNLYSLKINEDLFPVAYLIVENTNLTTSANILTRPETQFVMEGQPTVITVELDDPNVIVNWLKDRRPLHENERIRLETDGQGNHRVIIPNTCVGDQGTYLALTSSESVAITLVVEERIEEKEVMVIASGTESEEDDVQEYLVPPGSTATIACELEECELKRSIRWLRDGKDIRFEQGKTEHVQNGLKHYLVVHDATSLDSGLYKTERSEEQCEETIIPRGVVATIQCQTSEPQESIQWSKDGNIIPSDISRFEFRSLDNNQSHEMVISNISWSDAGVYSVLINGKSSFVSKIVVVESELITQSVEEEPEAEPEIDVSLHIVESEQIIELNVPQSPKLGASHETLVPIGQDDIEVIDKQEAAPVVESIEETSSIGSEEFEIIEKFTEEEVPKVAEPSEPTQADVPKIAAPLEQSQIQQEVPTVAAPSEPTQADVPKEAAPSEPSQADVPKVAAPLEQTQIQQEVPMVAAPLEPTQADVPKVAAPLEQSQIQQEVPTVAAPSEPTQADVPKEAAPSEPSQADVPKVAAPLEQTQIQQEVPMVAAPLEPIQEEVPKEAAPSEPTQEDVPKGAAPLEPTQEDVPKEAAPSGPTQEDVPKEEAPSEPTQEDVPKEAAPSEPTQENVPKEAAPSEPTKDVPKEAAPSEPIQEEVPKEATLSEPTQEQSEVSKRSEPVEPTQIQQAASEEETPLEETNETVVQTNEDVKEAEVPENAEAQKVVDSSDLQVAASEIAHLAIDEAVLETSNQPSQFDSLQEQKPSVVHENEHVRSVCVDLTFSRDSEQIVSDVIVAEVGYDEDECSTIADTITSLSSSPLYTAPVFTERLPSSACFANSKLTLEVMFSGVPQPTISWLIDDHELVSDGERISIKCENGVSAIRFFNVDRNAGGFLKCRATNCAGQVETSCEIVAADEISVISDSSITSSTRPHFVVPLPERVTHTVNDHITIKCKFSGQPLPAAMWEKDGVLLDLQKYQVTTEDGTSILKIESASLDDKAVYTCTIANEAGCESTSCTIDVVDDHLGLQQTGLHVMCERDQNDVELDILVQSPNHLGVTFNFPPVNRTLARQPPYFLLPLSDKVVIDEKCTLKCVVMGIPLVIVKWIVDGVVVTEDDNHEIHFEDGIALLRMKNIKKDKSVVQCEAINCKGKVTTSCVLTKCGVEESEAGDLQKPSFVLSLKDTCTTTDHATLKCIVVGTPLPDVSCSFNGVTDNSKIRSEDGIVLIQVNDVTEEGIVVECTISNETGSSTSNCVVKIIKQEEKNYQRPIIVFNQAGSVNNERELSVKVGVIASPEPTLFWKHNGKSIEEGGDYYLIFEDGIGILKVFNIQDGSHEFTCIAKNEYGQTTVEIPVEIGLKTENKLTLVKTLNDIAVVDDIVQLKIVAEGDLPIEFKWFEDGQILEDDSSHKITVDKCISTLQLKLEETGTRIITCEVSNSSSKVNASCNVERVHNTVSDFVMTNDNSTRFLAVGRKCTRERNNTILKAVVVARENIGDICEIDGEKIPDAYIEGNSLSIKVDTLSKKLSNVSFKVSASEGKVFETRKIEIAQEDTDEENFEINYSLRIDEQSGNTTYTFENSELYQGNQSRELDNTERNFTVNKEKDESKKPSEVQPAEIVEQKDVPVQETSAPTVEKLAPVESKETPEVQAAEIVEQKDVPVPETRAPTVEPTVEKHTPVDSKETSEVEPAEIVEQKDVPVPETSAPTVEPTVEKHTPVESKEKSEVQPAEIVEQKDVTCEEEIKELLTEVEVELFFSQAEVFSGLELDLLMECSEYVTTSIQKGSTAAPAQEPTVEKLAPVESKETSEVEPAEIVEQKDVPVPETSAPSVEPTVEKLAPVESKETSEVQQAEIVEQKDVPVPETSAPSVEPTVEKLAPAESKETSEVQPAEIVEQKDVTCEEEIKELLTEVEVELFFSQAEVFSGLELDLLMECSEYVTTSIQKGSTAAPAQEPTVEKLAPVESKETSEVQQAEIIEQKDVPVPETSAPTVEPTVEKLKPVESKETSEVQQVEIIEQKDVPVPETSAPTVEPTVEKLAPVESKETSEVQQAEIIEQKDVPVPETSAPTVEPTVEKLKPVESKETSEVQQVEIIEQKDVPVPETSAPTVEPTVEKLAPVESKETSEVQQAEIIEQKDVPVPETSAPTVEPTVEKLKPVESKETSEVQQVEIIEQKDVPVPETSAPTVEPTVEKHAPVESKETSEVQPAEIVEQKVVPVPETSAPTVEPTVEKLAPVESKETPEVQPAEILEQKDVTCEEEIKELLTEVEVELFFSKAEVFSGLELDLLMECSEYVTTSIQKGSTAAPAQEPTVEKLAPVESKETSEVEPAEIVEQKDVPVPETSAPTVEPTVEKLKSVESKETSEVQQAEIIEQKDVPVPETSAPTVEPTVEKLAPVDSKETSEVEPAEIVEQKDVTCEEEIKELLTEVEVELLFSQAEVFSGLELDLLMECSEYVTTSIQKGSTAAPAQEPTVEKLAPVESKETSEVEPAEIVEQKDVPVPETSAPTVEPTVEKLKSVESKETSEVQQAEIIEQKDVPVPETSAPTVEPTVEKHAPVESKETSEVQPAEIVEQKVVPVPETSAPTVEPTVEKLAPVESKETSEVEPAEIVEQKDVPVPETSAPTVEPTVEKLAPVESKETSEVEPAEIVEQKDVPVPETSAPTVEPTIEKLAPVESKETSEVEPAEIVEQKDVSVPETSAPTVEPTIEKLAPVESKETSEVEPAEIVEQKDVSVPETSAPTVEPTVEKLAPVESKETSEVEPAEIVEQKDVPVPETSAPTVEPTVEKLAPVESKETSEVQPAEIVEHKDVQVPETSSPTVEPTVEKLAPVESKETSEVEPAEIVEQKDVPVPETSAPTVEPTVEKLAPVESKETSEVEPAEIVEQKDVPVPETSAPTVEPTVEKLAPVESKETSEVQPAEIVEQKDVSVPETSAPTVEPTVEKLAPVESKETSEVQPAEIVEQKDVPVPETSAPTVEPTVEKLAPVESKETSEVQPAEIVEHKDVQVPETSSPTVEPTVEKLAPVESKETSEVEPAEIVEQKDVPVPETSAPTVEPTVEKLAPVESKETSEVQPAEIVEHKDVQVPETSAPTVEPTIEKLAPVESKETSEVEPAEIVEQKDVSVPETSAPTVEPTIEKLAPVESKETSEVQPAEIVEHKDVQVPETSSPTVEPTVEKLAPVESKETSEVQPAEIVEQKDVTCEEEIKELLTEVEVELFFSQAEVFSGLELDLLMECSEYVTTSIQKGSTAAPAHEPTVEKLAPVESKETSEVEPAEIVEQKDVPVPETSAPTVEPTVEKLAPVESKETSEVEPAEIVEQKDLPVPETSAPTVEPTVEKLAPVESKKTSEVEPAEIVEQKDVPVPETSAPTVEPTVEKLAPVESKETSEVEPAEIVEQKDVPVPETSAPTVEPTVEKLAPVESKETSEVEPAEIVEQKDVPVPETSAPTVEPTIEKLAPVESKETSEVEPAEIVEQKDVSVPETSAPTVEPTIEKLAPVESKETSEVEPAEIVEQKDVSVPETSAPTVEPTVEKLAPVESKETSEVEPAEIVEQKDVPVPETSAPTVEPTVEKLAPVESKETSEVQPAEIVEHKDVQVPETSSPTVEPTVEKLAPVESKETSEVEPAEIVEQKDVPVPETSAPTVEPTVEKLAPVESKETSEVEPAEIVEQKDVPVPETSAPTVEPTVEKLAPVESKETSEVQPAEIVEHKDVQVPETTATTFEPTKEKLAPVDSKETSEVQTAEIVEQKDVPVPETSATTVEPTKEKLAPGESKETSEVQQAAIVEQKDVAVPETSATTVEPTKEKLAPVESKETSEIQTAEIVEQKDVPVPETSTSYVEPTKEKLAPGESKETSEVQQAAIVEQKDVPVPETSATTVEPTKEKLAPVESKETSEIQQAAVVEQKDVPVPETSATTVEPTKEKLAPVESKETSEVQQAAIVEQKDVPVPEANAPTFEPTVEKLAPVESKETSEVQQAAIVEQKDVPVPEANAPTVEPTVEKLAPVESKETSVESKETQADAKLKKEKDDKHKQEADAKLQKENDDKLKQEADAKLKKENDDKLKQEADAKLKKENDDKLKQEADAKLKKENDDKLKQEAAAKLKKENDDKLKQEADAKLKKENDDKLKQEADAKLQKENDDKLKQEADAKLQKENDDKLKQEADAKLQKENDDKLKQEADAKLQKENDDKLKQEADAKLQKENDDKLKQEADAKLKKENDDKLKQEADAKLKKEKHDKLKQEADAKLQKENDDKLKQEADAKLQKENDDKLKQEADAKLQKEKDDKLKQEADAKLKKEKDDKLKQDADAKLQKEKDDKLKQEADAKLKKEKDDKLKHEADAKLQKEKDDKLKQEADAKLKKEKDDRLKKDADAKLQKEKDDKLKQEADAKLKKEKDDKLKHEADAKLQKEKDDKLKQEADAKLKKEKDDKLKQEADAKLQKEKDDKLKQEADAKLKKEKDDKLKQEADAKLQKEKDDKLKQEADAKLKKEKDDKLKQEADAKLQKEKDDKLKQEADAKLKKEKDDKLKQEADAKLKKEKDDKLKQDADAKLQKEKDDKLKQEADAKLKKEKDDKLKHEADAKLKKEKDDKLKQEADAKLKKEKDDKLKQDADAKLKKEKDDKLKHEADAKLQKEKDDNFKQEANAKLQKEKDDKLKQEKDDNFKQEANAKLQKEKDDKLKQEKDDKLKQEADAKLKKEKDDKLKQEADAKLKKEKDDKLKQEADAKLKKDKDDKLKQEADAKLKKEKDDKLKQEADAKLKKDKDDKLKQEADAKLKKDKDDKLKQEADAKLKKEKDDKLKQEKNDKLKQEADAKLKKEKDDKLKQEADAKLKKEKDDKLKQETDAKLKKDKDDKLKQEADAKLKKDKDDKLKQEADAKLKKDKDDKLKQEADGKLKKEKDNKLKQEADGKLKKEKDNKLKQEADAKLKKEKDDKLKQEADAKLKKEKDDKLKQEADAKLKKDKDDKLKQEADAKLKKEKDDKLKQEADAKLKKDKDDKLKQEANAKLQKEKDDKLKQEADAKLQKEKDDKLKQEADAKLKKEKDDKLKQEADAKLQKEKDDKLKQEADAKLKKEKDDKLKQEADAKLQKEKDDNFKQEANAKLQKEKDDKLKQEKDDKLKQEADAKLKKEKDDKLKQEADAKLKKDKDDKLKQEADAKLKKEKDDKLKQEADAKLKKEKDDKLKQEADAKLKKDKDDKLKQEADAKLKKDKDDKLKQEADAKLKKEKDDKLKQETDAKLKKDKDDKLKQEADAKLKKEKDDKLKQEADAKLKKEKDDKLKQEADAKLKKEKDDKLKQEADAKLKKDKDDKLKQEADAKLKKDKDDKLKQEADGKLKKEKDNKLKQEADGKLKKEKDNKLKQEADAKLKKEKDDKLKQEADAKLKKDKDDKLKQEADAKLKKEKDDKLKQEADAKLKKEKDDKLKQEADAKLKKDKDDKLKQEADAKLKKDKDDKLKQEADAKLKKEKDDKLKQEADAKLKKDKDDKLKQEADAKLKKDKDDKLKQEADAKLKKEKGDKLKLEDQTNQSRIFEETSIEVTSLLKCKQQAIIVSKSFALCERVVLNAEEPFTLEVFCNAVFVKQRTDKIGIGIIFERSGASKKDESRPDRLDDNCVLTDVTDGLSILSPPPKAKKHLKKKKKHHKKEKIAVKETEQDEKTVSHLKPEISGMERKRSNSGSSDIFVDVDIEAGEESIHTDALVDLNFYDYDQMELSIFEDYDSDDDSASIDCDVSLSNVAADDGIDVFPSDGDTQEVEQKVTLPKKHQSDEDVISKEEENLETSVSYGSIEETVSFTIGTGQSIIEHPKSHAVGQMNSEVIIKCKTSQPISDAKWFCNGMVLLPDEQVNMTVTGCEAVLRLVKFLPQNKGNYHVLIDGSIGSQPAILSGPVPPVILNKLTKPITHQAGKSFTYKFNFMGAPAPRLRVLSNGEPVSFDVKYEIYDNIASLYIPKMSKRDGGEYTVVLENKYGKDESDLHITMVDTPLKPRKAQLVALTDTSATFKWLPPHTGESDILHYIVMRRSTESRRWRNIGHVQEKTFTAIELVPNEFYAFRIVAVNGFGEGAPSEIIEVNTLDYDQEESFDFAGEEELKLDDVQVNNEVVTEITIEESEVTIEEHRKLKKKSKKSKKTTDEPELDSEIALEVSSDITSSLEITTESTIPDTAPESQETLNVEIAVTETTVQKITNPSDESAKKDVNEDTAVSSIVKKDDKDVNKKSLPESGLTTKKEIQGKPEKKIMKKKTEKADSSISETSETLTKDLTQTKQSEPEPAKRTTETSVQDEVKRKTETTSKSKQTTEEHPQPGGKSDSSISSTSDASEVKQVQQSESEAQKVTEKPETAKLESKSKMTEDTTKESDNKETVDEKPKKKVLKKKTEKSDSTISETSETSAVESAGPSESETQNVAAVDKEKKQKETDEKQKLEAEIAGKKSTEQKSKLEAEAKLKRAAEEDAAKKQKEKTEAASKKAAAEKLELEKQAQINKAAEADAVKKQNELDEQNKLEATKKLAAEKLKLEEQSAAKSKQAAEEQAKLDAQTKAKAAEKQTGLEKDEKSNKDSGSNETVEEKPKKKVLKKKTEKSDSSISQKSDTSKTVAESAGSSESETQKVADATSKQKETDKKQKLEAEITAKKSADEKSKLETESKLIKAAEDAAKKQKEKEDKLKLEADVASKKAAAEKLELEKQAQIKKAAEADAVKKQKELAEKQKLESEAATKKAAAEKLKLEEQAQINKAAEADAVKKQKELDEKNKLEANKKSAAEKLKLEEESAAKSKQTVEEQAKLDAQTKEKTAEKQTGLEKDDKSTKDSESKETVDEKPKKKVLKKKTEKSDSSISQKSVTSKTVVESGGPSESETQKVADAARKQKETDEKQKLEAEITAKKSADEKSKLEAESKLKKAAEVEAAKKQKEKDEQLKLDTEAASKKAAAEKLELEKQAQIKKAAEADAVKKEKELAEKQKLESEAATKKAAAEKLKLEEQKKKDAETASIEKQKEQEKLAQEQSKLEVDAKKSAEKQKLESETKSKKTEEAPKESVDEKPKKKVLKKKTEKSDSSISQKSDTAKTVAESAGQSDSETQKVSEADKAHKQKESDEKQKLESEIAAKKSAEQKSKLETEAKTKKVIEDESAKKQKEQEDKKKGDDSAKKQKDQKEKQKLESEATSKKPTSEKQKDEKTPQEKAKSENETVMTTEPQQLEVKSEPKKSDKTETVEKEVASSTEKSDDSKTKEPKEKKKIIKKKKDTTKPQEASKELSSDESRIDLESDISLSLDTVTESDDLSTASTIKLQKESDESGIDSRMGQTSEAEDSPFISQPVSATVTEMAGEAKFTVKFSRKPIYVKWMRDDREIRVAYGKASVETTDDSSVLVIKNIDGKDVGNIYAVFDSEYRSAMARLDLRVPCKITLESSSNAPEIVAGKNLDLSFKISGYPLPTNIELLHNNENLRTRSDVTDFDDSISIRMKRLKLEDSGEIKIIGKNDSSEDQLRIPINVIEVTSKPTSLQVTSTERETVTLTWSLPTELNGSNVNEYLVERKTVDGGRWRHACTVTDSRAVVDGLFSGTEYVFRVVAVNGAGQSAPSDTIEATTQAEEEIDETVPTSPVEKVKEPVSKKPENTKESEGHKKRDRKESEDHDENNLGKSGKDEFATSGESGTSNQNEESAQLNTSFTSTEQHGQTEKQVRKGTRKSLTRSLNIRESDIDADVVEVEYDEQGDDIPSDPTTSGTYAFDKIEEEPARTSGEMAMAEKDSDAMEVRGLNKKLSKKGGKEGTSTEKSSSKTKKQEKSALSVQEMNKSLKKKGEKGEAETAASDFIENADQTGMSIQDLNKSMKKKVESGEATGQINDASNNKDADELSIQDSQQSLKKKSENESVTGEQLDKSQEVEDDKMTIQSLKKSIKKKPESREVSGGKSEKSKEKESDEMSIQQLNKSVKKKPENEAVTQGKSGKSQEQESDKMSIQALNKSMKKKDGVDGVEGNINIGRSDGDQLSVNDIDAELSTSEQVENASQNLGATADSDGDSLSLQTLKKRISKKGIHGEAESKLGEKQSGSDSFTLQDLYEELKAKEDAVEAGAETSNADQSAEKTSLEVRDMKKKMKKKQVSGTAENLIGESNRDETSMEIRDLNTQHSNQTGEDESSTFNFGQKDQEQYSMVMKDVSKKLARQNAEEIQSGKLIPTTNEEKTGLALTGKNKNLKKGEENEKTKFEAKHLGSSSASDSLAESTLRSKKTKKGEVEKSELSIDMKNQDKTTLATTLLEDDLAKTTSAEESEAEHLVALQNKEKTSLAMRRKRVSFDSSTKSESIEDVIPDKNRDSDKMSITGIKKKMSQKSESAEAQKNESPEVKEISSFEEKTLKSKKKSKADRNQGTEANLGDKTIDKDYLSVTDKNQSLEKSEASGQAEKSIKAPNKSKVTTSFADESLTSELDRLMADEEMAEMMFAEEEKAADLLNVMNKNKGLNKSEQEESQEISLKSQSKVKDSDSLSSTDKKIGLKKSDKDQKLGTSKIFGSKDQESVGYEEKTSNFSKQRRGVSDLGSDAMTDQKNVQESQYAEISADDHMSKTGADGEISATRTIVDGSDAAQGSEYAEISKKRKFKRAEQIGEAETSLCDSRENTHDSLSISDVNPELRRSNVEISAFGQIDLTAEEVTSLTDINKDAQLTKKQDENDAKKSVSKNLKAGAKKDSDTLSITSKKDKFGKRQDSREASATVEQQGEEKVTKNLKGSRGKKEKLGDAGIDVNFENQEEFASTTGDIESIVSEKGHDTYSEKTVKSSKKKSPQTAGAEYGGSESLNASSALSTTDVDAQLKNQEKDGVAESSIGKSNQKDSYSEQELNVNKKKKQAVGAAMNQGSGSTKESDNLAVASVESNLAKDSANQEASLHGLVDNDATSLSQLDSEHRLKKRDDELSAHTKLGKHTQSENIALTETDDSLVKGDSEESAELNIKQQGETAEDKYVESRKKTTLKKKPEQKQVTDTLSAVDGRHDTTSLSVADSGISFDKSMENELAGSGDGTASASVSAKVRGADGNAKTNLISSFEKPGQESKTSKTLSGKQKKQEKSSFAEKNAGFDLSMGEGKNDESVESSLQKNRDADSLALQGTDLAFSKPSDSSANAHLDMPQRELTLRICQAETVDWSDDSEVEEGTRTSAPGEVKKKKKFIISAISQDGEFSDAESITFDENGVRVEKRRRKKRDPKEYMGAGELAMRIPAFAKKMQYIGCIEGDVVVFTIKVVSDDVPLIRMYRNDFPVANFDKMAFEGFTKGSEHSFNVTINDIRKLDGGKLVFEAKNDYGVDKCTILLDVRDSGSFIEDYSEIHRSAEIQNSVGDVQVKEGETAKLTGRVDGFPLPELIWIKNGKEIDMMVPSTKYQLDYHSDGEFEARIANCTFEDDDDYSLLVENLAGVDSCNFQVFVDCNEYPDDEHFNRRRRLQRGRRVMEASSDSELDDAKKRKKRRIKRVVERRNPNAPRLTQLIPPRFDKILSDHDAIEGENVVMMVETLGEPEPQVRFYRDGKLIDDGSGDRMEVRHEDEMRKHWLILKDICKDEEAEYACQAINVAGEAWCFSDVVVHMSEESRDDDKSVDEVDDSTVLEEKKDDGDDKSKPKTKKKIIKKKETPESEQVTAAEPEQQKISEVDVQSVAETEVGAKKKPDAEKPTDLSKAKKDSKSKKSDEPEASTEEKSTTEKPTNDKTSKKSAEKKTVKPKKEVTGKPLEAKKPVEDKKDASQPSSSKESSPPTDGKKKKQIPKALFIPDEISSRFGDPSTMHSETNITTTIRGREGSADAKTPLVEPLSASVSMKVESAKEKAEFSFKRRSETPDDKSRKKEGLPPAKKSEKKDEVTAEKQSTEALIESKKKEVDESKISEQQPSDKNKSEVVGVPEKAAGPETKKDVSEIEEVPKKKTIKKKTEKSDSSISQKSNVLKPADDDKSKSDDVTDKSKKTTEDQTKVATDSKLEKAADTTKQIETETVVDDKSKKKVLKKKTEKSDSFISQKSETPPVVEPTKPAESEAQKIAEVNKAKKQKEVDDNLKREAEVAAKKIADEKLKIEAEANIKKTAEVEAAKKQKEKDEQLKLETEVVSKKSAAEKLELEKQAQIKKAAEADAVKKQKELNEKNKLEAAKKSAADKLKLEEESAAKSKKVSEESVKFGEEKKTKAGEKTVQVESEPTSKKTIDTKDVGATEPADETPKKKIIKKKTEKSDSSISQKSATDSEKVSKQKEQDEPTKPAVSETQMVTEADKSKKQKETDEKLKLDAEIAAKTKQEADEKSKLDAQEKIKKVSEDDAARKEKELNDKLKLESEIATKKASADKLKLEEQAQAKKAAEVEAAKKQKEKDEQLKLDTEAASKKAAAEKLELEKQAQIKKAAGADAVKKQKELDEKNKLEANKKSAAGKLKIEEESAAKSKQTVEEQAKLDAQTKAKTAEKQTKLEKDEKSTKESESKETVDEKPKKKVLKKKTEKSDSSISQKSETSKTVVESAGPSESETQKVADAARKQKETDEKQKLEAEITAKKSADEKSKLEAESKLKKAAEVEAAKKQKEKDEQLKLDTEAASKKAAAEKLELEKQSHIKKAAEVDAVKKQKELEEKQRLESEAATKKADAEKLKLEEQKKKAAEIALIEIQKEQEKLAQEQSRLEDEAKKSAEKQKLESETKSKQTEEAPKESVDEKPKKKVLKKKTEKSDSSISQKSKSAKSTVDAAETLESDFNLVEKKTVQKVEQSPDESTSATIKRDPAQKTEEISKQDDGDEKKTTTDGKPPKPEDSEATPKKRVVKKKTQKSDSVASDASLADVSKLSDDVEEKPKKKVLKKKTEKSDSVISETSSVDTIKPESVEIPTEKAEQMILHNRFSTDSAVESEPKNAHKDDTEKTTDDMMTRRKSSAIFSDDEQSISSKTSSEGRRRRRRTGFASKFASDTLALRGDNVEIEAELLAEDDTVTWKVNGKDADLNSRCHEMSHTFFRTLIIDEVEPTDSGMEITATCGTESHTTILKVEELPVDFVKYLPRKTSGKEGQEVTISVTLNHPIDISKVVWLKDGKPLEINKDYSIDTVGCSVSLTLRRAKYEDSGKYKVVCDGVDCSTHLSIQGKPVLKNVSETKPVITVDKDDQFSLLVAYDSNPEASFSMTVDGKDLEFDGRSRIDVVDDGLKLTKRGVSKTDAGEYEVKLKNEFGEVAQKFDVKVNDTPSAPGDVSVVKAESDCLHIEWTAPTEDNGAEVTSYVIEKKESGRRKFHKVATVNGKKTSYVVDDLEIETPYIVRIAAVNKFGTGEFIETKPVQTGSPFQVPTVEFPPTIDNVTSTSCSLSWPKPIEDGGSPVYGYDVYKRENEGEWQKMNGEELVFTESFNVRALSSGKEYEFKIEACNEAGLRSNSNVVSKKLTVEGLVPEIILDMPMVKVLDNDKVEVTWKSDGEKEFVVQYKSDGSSIWASVDIGGPRSESAATSKCIIDGLREGIPYVFRVAARNQHGTGEFSEPTIPVVVLADDAPRVLKAIKPVKIPKKGELRLECHAAGHPAPEYIWYKDGKEIIPTDENTEIVNEGSMSALIIHELAGEDVGLYKVLVENIHGTAESEAEVGISDVRAHFNSSFSELTEIEEGHDIELTCEVSDEEAVVNWYKDGKKLVASDRVQFYAMARKRTLRIKGSTDADSGVYKCETTDGRSRTEGEVIVNEQEPHILVGPQDAIVKDFGETMVLFCETSKPVRKVKWFKNGVEIWPQMNKAIMENDGKRATLEIKNFDKHDIGAYTASVSEKETSAPAKLVFEVAPNLIIPTEIRDGVTVHAGNEFDFAVEFSGFPIPTIHLTNNGTPLKAIAVVTEYDDSVSVRMKDVTLDNSGTVRVIAESPLGQCIKEIPLKIIDKPSAPCDLQFKEVTEDSVFLSWQPPLETNGAPLTGYVIERKAVDNNRWRPCGQVKPTKLTFVAEDLFCNQVYGFRILAVNEVGESEPCDTVDVLTLESSEPVSESSELFVPKIAILRTPQVTVAVDETKVTLRWEECPETSLYKVERKKVGDSDWLEIANTDRNKFKDRSLTESGEYVYQVTATGIHAVSSPSEETNPVKILVPGSEMPASKTEKKTDAAKSESEQKSAEEIVAEKQVDQSQASESTTEAVEEKKTKKVVKKKVAENKGEETLQEVKEKLKKGKAVEKVQDESRRGSLQASSDNESVTTTSEKRSEAELEKNSEKSAEKKSTSADLEAADKAETEKSETGKETTEKKKKVVKKVAKKGLVKADKSKIELTAGKEGEISAQVAETGVSVEWKKDGKALDASYTVTSTGGVSTVKIPIVDVNTSGVFTCKVKSSEGDEEEVSIAVTVKLPEVPKVEAEQSIVEVKVGDVAKLSAKISEPASSVNWTKDDKPIKEDGNVKAQLSPDGTAQLTISKTDSAHSGIYKLNVENDAGKGKVEIALRIKGAAKGAPGIPTGPIVFDDVTESSAEFSWKAPENNGGCEITGYNVERKESKNKGWKQCGKTKELKFKADGLEEGTDYDVKVSAVNTMGTGSALEGKITTLKKKEETGKQKSEKSESDEKKSESDKVSELKQIGKPEYVSSTATSIALKWTSDNDEVTYTVQMKEANSKRPWAVVAKEISECSATIAQLKEGTSYLFRVIAQNKTGQTVTSEQSESIECKDTTESKKPAFTNAPTDLTAVKNGKTKITAEFTGHPAPEIHWFKNKKEIFSGKRQWIENIAGATSLTIGEMREDDEGEYKIVVKNTAGSVEHSCKLTMDQLPEINRVDRYASTLVFDKGETVKLRLSFSGRPQPEVIWIDNNGKVIEESRKMKIEKTVLNTVLTINSIDSQDQGEFALKIKNRCGEDKYAIGIQVTDRPAAPGKPAVEDQNVDSVRLRWAAPTNDGGSPVRNYTVEMCTEKGKTWTKAEVTKQAFITLFNLVPGESYRFRVRADNTFGQSEPSDESELVVVKNVSRVVEEPKKKEVKVKEQESVDYERVAKDSEPSEYKTIDIHRLPNDLQAKYIIHEELGKGAYGTVYRATEKATGKTWAAKMVQVRPGVKKENVIHEISMMNQLHHEKLLNLHEAFDMGNEMWLIEEFVSGGELFEKILEDDSLMSEEEVRDYMHQILLGVSHMHKNQIVHLDLKPENILLKAKNSNELKIIDFGLARKLDPKKSVKLLFGTPEFCAPEVVNYQPVGLSTDMWTVGVISYVLLSGLSPFLGDSDEDTLANVSASDWDFDDPSWDDVSDLAKDFICRLMIKDKRKRMSVQDALRHPWITGPLLSAFNDLSEYVKKMQPKLDKSGVPARQKRNFLSLKRWSDDLLPIGRLAKRGAIFRRLTMDGVFERNIAFDTDAAPSVKKQLEDIVANVGDLIATLSCDVDGVPSPKVQWYKDDKELTVPSMKYDSFYNEGLAELTVKNIVESDAGKYTCRATNDLGSIMTHAKLSVKADEKKKKKSKTSPAVIEKKKDRKTSKVVVIEEMIDMPPNFHHLLQDDEAKIGEPKILVVTNTTLPEPTVDWYHNGEHISINDSNYLRKHDKGRYELHILSVDSTDEGKWKAVGKNAFGECESEAKLTVVIPDGQYAPSFGKQLSDVKCSESDILKLEVNIQANPAPEINWFRNESEIEHSQHHRLQFDDGSGNYSLTIIDAYAEDSGEYKCVAKNKIGKAHTVCCVRIEELLSKRSKKIDGSKAPRFRMQLPTPREVPQGADLTLVCSVSGTPHPNIKWTKDDKPIDMSNKQVRHENGVCTLHIIGARDDDQGRYVCEAENIHGVAQSFSVVEIKEAVDKDHVRPKFLEPLVNCSTCEGNEMVLECCVTGKPIPTITWYKDGLKLIIENRMLQYTDRKGVSRLNIMNVVMNDDGEYTCEAVNSLGKDFTHCTVKVVDMGLSKTRLTPVRSRSRSRSRSPSVVGGEIQRPPVVTRPLADATVTEGNRELLEVEVDGFPTPTIEWYHDGKLVAESRTLRTYFDGRVAFLKIYEAHEEHNGQYVCKVSNKLGAVETRAIVVVEAPDAAEHVTQMPTFVKKLQDVVLKTAGETATFTCQSYANPAAQVVWLHNGKALQQTKSNYKTRLFDDNTATLVIENVTDELCGTYTAVANNQFGDVHTSAQLTISGSEAKKIAASLPYFIIELKPKINVVEGATLSIQADLNGSPIPEVVWLKDNSELVESDRIQMKCDGVNYQLLVRDVGLEDEGTYTITAENEKGKIRQNTEVSVTKSKEVKEKKEKKKVEKKDEGKKKPGRPGLPRPSGASKTEQVTMAFDAPSEGPADSYEVERRCPDQREWVSCGSTKSLELEIKGLTPNTEYIFRVAGKNKQGLGEWSEMTSTLKTASVGQAPQFTISPQSKIIANRDDEFEIAVEFSGTPTPSVKWYKENLQIVPDEKIDVATTSTSSILNLKSQEENGTFNCLIENELGQASASCQVTIFNKPASLQSTPDHSLERNLVPTLQKALNNESAQAGQQIMLTCRISSRSESTVAWFKDDERIESAGRYELSSDKKSNHKLVCHAVQSQDTGKYRCVVTNKYGYAESECNVAVEDVTKFIAPSFSATLSDSTAILGHNITLECKVEGSPAPEVSWTKDGERISTTRRIRQTQDENGNCKLSISKAESDDMGVYVCSATSVAGVDSTSSMVMIAKTTGTDSHLVIAQTADEKHEKPRFTRAPPSLIEVNESGQFTLIAKAVGEPKPTVTWLKDGREILRTNRIYHHFVTGDGESHLIAECVVSKTSGIFSCKAENPNGTVIAETQVIVQRMKPANQLANVAPKFTIPLTDMGIVNGHPTTLSCNVTGSPEPTLEWIYIDDSGHKINLTSSTTDWTECRFGKVAELKSERVLREQRGTYQCIATNSSGQATTQCYLLVGELSDEPAGPPRFVKCLQDTWTPLKESIEFSVELAGFPTPDLTWYHNEKKINEGKDVKITFPSDTTSVLSIKNVSLASLGMYFVEASNIHGVLRTAGRLNVSDERRKAEPPQFKHVLEPVLAVQPKVAFSEEHPRASSSAATARVKKGAAPMFLQGLEDMDLKAGASAAVAGKLGRKLRPHRSTTNDADKLAKALAQSLRLDEPRASIDSRPESAANAALDEVRAAINSRNKRVCRPKFMVKPKPRKVLEEYKSLRLKTAISGNPMPQVHWDKEGIILETGNKYSIYNDGDFYYLEVHHVSTFDKGFYNCTAANNEGIITCTSEIDVLPNKEDSAAQVAKRKSRKEAKAPNFIEVLPGRSQANLNESLCVECSVSAYPCASIIWTRNSVRLLPQADRYTMSYDGECASLKFISVTPGDEGTYACEAVNELGSAVTNMNLQVSGVDPNAAEGIPPLFRFEKIKSVRKVVDGSRVELAAELVQASEPLQIRWLRNKVTIVDSPSFSYSRSENMVFLTIADVFPEDGGEYTVEAKNQSGIARCTMQLDVRNNERSVADEAPRVFDFEPTTRSDPGVSVELRAKVIGHPDPVISWTKAGQKLNNEEKYMMRNEGDKFILRIANVTRADAGKYELTAINPSGQANAELELTVVQSTKTVGAKPKFNESPISVQTCEKNRAELRASFSGTPAPACRWFYNGNELIDGLDGYTITSSDTNSSLLINSVDKKHFGEYLCTIRNQNGEELANAMILSEVLSMFYSSLFLVVFVDIVAQCHVARLLHFLNEERFVGRNIFA.

One can recognise an Ig-like 1 domain in the interval 90-176 (PKFIQVIKAY…GVSTSYGYIT (87 aa)). Residues 384–404 (RFHPQPPKPPRAGTSRRFLPE) form a disordered region. Ig-like domains are found at residues 406–493 (PKFV…TQVT), 821–913 (PKIV…AFIN), 943–1038 (PKFI…LTIS), and 1135–1225 (PRFE…LTVD). The cysteines at positions 842 and 897 are disulfide-linked. The tract at residues 1336 to 1360 (LPPVQKSMSVQEEKASSQRTPSPMN) is disordered. The 84-residue stretch at 1679–1762 (PKFLRKLVNC…ASNVAGTTFS (84 aa)) folds into the Ig-like 6 domain. A disulfide bridge links Cys-1700 with Cys-1751. Coiled coils occupy residues 1766–1786 (LKLS…SEIK), 2011–2038 (QSLD…ERTS), and 2065–2085 (ISDQ…ALQE). Residues 2155–2177 (RKGSDKDKRKATRIKRVPSAHSA) form a disordered region. Residues 2163–2172 (RKATRIKRVP) show a composition bias toward basic residues. A coiled-coil region spans residues 2205–2231 (LKQNEEAKEIQELFVKIEKEINTIAEL). 2 disordered regions span residues 2298–2459 (IIGI…TADA) and 2614–2637 (KSSL…EVTA). Residues 2309–2323 (RRPSSTPRGSTRSSN) show a composition bias toward low complexity. Residues 2324-2341 (LTTSQDSQATTKMTVSSE) show a composition bias toward polar residues. Residues 2606–2630 (LMQTLASEKSSLKAAEEDEKEGEEE) adopt a coiled-coil conformation. Residues 2621–2636 (EEDEKEGEEEGEEEVT) are compositionally biased toward acidic residues. 2 Ig-like domains span residues 3095–3177 (KEVM…SGLY) and 3179–3264 (TERS…SFVS). Residues 3362–3692 (EVPKVAEPSE…NAEAQKVVDS (331 aa)) form a disordered region. Residues 3655 to 3665 (SEEETPLEETN) are compositionally biased toward acidic residues. 3 Ig-like domains span residues 3789–3878 (PVFT…CEIV), 3897–3985 (PHFV…CTID), and 4038–4125 (PPYF…CVLT). Intrachain disulfides connect Cys-3919–Cys-3969 and Cys-4059–Cys-4109. Disordered stretches follow at residues 4553–4599 (QSRE…SAPT), 4634–4699 (TVEP…EIVE), 4750–4814 (GSTA…TSEV), 4826–4855 (PVPE…EVQP), 4912–4931 (STAA…VESK), 4950–4969 (PETS…PVES), 4989–5216 (PETS…EILE), 5267–5294 (GSTA…EVEP), 5306–5325 (PETS…SVES), 5345–5372 (PETS…EVEP), 5428–6101 (GSTA…VEPT), 6127–6157 (VQVP…EVQP), 6214–6900 (STAA…ETSE), and 6930–8453 (APVE…DDKL). Residues 4555–4577 (RELDNTERNFTVNKEKDESKKPS) show a composition bias toward basic and acidic residues. PVET repeat units lie at residues 4599–4626 (TVEK…KDVP), 4627–4665 (VPET…KDVP), 4666–4704 (VPET…KDVT), 4755–4787 (PAQE…KDVP), 4788–4826 (VPET…KDVP), 4827–4865 (VPET…KDVT), 4917–4948 (AQEP…KDVP), 4949–4987 (VPET…KDVP), 4988–5026 (VPET…KDVP), 5027–5065 (VPET…KDVP), 5066–5104 (VPET…KDVP), 5105–5143 (VPET…KDVP), 5144–5182 (VPET…KVVP), 5183–5221 (VPET…KDVT), 5273–5304 (AQEP…KDVP), 5305–5343 (VPET…KDVP), 5344–5382 (VPET…KDVT), 5434–5465 (AQEP…KDVP), 5466–5504 (VPET…KDVP), 5505–5543 (VPET…KVVP), 5544–5582 (VPET…KDVP), 5583–5621 (VPET…KDVP), 5622–5660 (VPET…KDVS), 5661–5699 (VPET…KDVS), 5700–5738 (VPET…KDVP), 5739–5777 (VPET…KDVQ), 5778–5816 (VPET…KDVP), 5817–5855 (VPET…KDVP), 5856–5894 (VPET…KDVS), 5895–5933 (VPET…KDVP), 5934–5972 (VPET…KDVQ), 5973–6011 (VPET…KDVP), 6012–6050 (VPET…KDVQ), 6051–6089 (VPET…KDVS), 6090–6128 (VPET…KDVQ), 6129–6167 (VPET…KDVT), 6219–6250 (AHEP…KDVP), 6251–6289 (VPET…KDLP), 6290–6328 (VPET…KDVP), 6329–6367 (VPET…KDVP), 6368–6406 (VPET…KDVP), 6407–6445 (VPET…KDVS), 6446–6484 (VPET…KDVS), 6485–6523 (VPET…KDVP), 6524–6562 (VPET…KDVQ), 6563–6601 (VPET…KDVP), 6602–6640 (VPET…KDVP), 6641–6679 (VPET…KDVQ), 6680–6718 (VPET…KDVP), 6719–6757 (VPET…KDVA), 6758–6796 (VPET…KDVP), 6797–6835 (VPET…KDVP), 6836–6874 (VPET…KDVP), 6875–6913 (VPET…KDVP), 6914–6952 (VPEA…KDVP), and 6953–6991 (VPEA…KLKK). Basic and acidic residues-rich tracts occupy residues 4638–4651 (TVEK…KETS) and 4677–4691 (TVEK…EKSE). Residues 4960 to 4969 (TVEKLKPVES) are compositionally biased toward basic and acidic residues. The segment covering 5038-5051 (TVEKLKPVESKETS) has biased composition (basic and acidic residues). 2 stretches are compositionally biased toward basic and acidic residues: residues 5116–5129 (TVEK…KETS) and 5155–5168 (TVEK…KETS). The stretch at 5212-5235 (AEILEQKDVTCEEEIKELLTEVEV) forms a coiled coil. Over residues 5316 to 5325 (TVEKLKSVES) the composition is skewed to basic and acidic residues. Composition is skewed to basic and acidic residues over residues 5477-5490 (TVEK…KETS) and 5516-5529 (TVEK…KETS). Basic and acidic residues-rich tracts occupy residues 6690 to 6704 (PTKE…KETS), 6729 to 6743 (PTKE…KETS), 6768 to 6782 (PTKE…KETS), 6807 to 6821 (PTKE…KETS), 6846 to 6860 (PTKE…KETS), and 6885 to 6899 (PTKE…KETS). Basic and acidic residues-rich tracts occupy residues 6972 to 7606 (ESKE…DNFK), 7613 to 7630 (LQKE…DNFK), 7637 to 8062 (LQKE…DNFK), and 8069 to 8453 (LQKE…DDKL). Positions 6984-7812 (QADAKLKKEK…DKLKQETDAK (829 aa)) form a coiled coil. BLUE repeat units lie at residues 6992-6996 (EKDDK), 6997-7012 (HKQE…NDDK), 7013-7028 (LKQE…NDDK), 7029-7044 (LKQE…NDDK), 7045-7060 (LKQE…NDDK), 7061-7076 (LKQE…NDDK), 7077-7092 (LKQE…NDDK), 7093-7108 (LKQE…NDDK), 7109-7124 (LKQE…NDDK), 7125-7140 (LKQE…NDDK), 7141-7156 (LKQE…NDDK), 7157-7172 (LKQE…NDDK), 7173-7188 (LKQE…NDDK), 7189-7204 (LKQE…KHDK), 7205-7220 (LKQE…NDDK), 7221-7236 (LKQE…NDDK), 7237-7252 (LKQE…KDDK), 7253-7268 (LKQE…KDDK), 7269-7284 (LKQD…KDDK), 7285-7300 (LKQE…KDDK), 7301-7316 (LKHE…KDDK), 7317-7332 (LKQE…KDDR), 7333-7348 (LKKD…KDDK), 7349-7364 (LKQE…KDDK), 7365-7380 (LKHE…KDDK), 7381-7396 (LKQE…KDDK), 7397-7412 (LKQE…KDDK), 7413-7428 (LKQE…KDDK), 7429-7444 (LKQE…KDDK), 7445-7460 (LKQE…KDDK), 7461-7476 (LKQE…KDDK), 7477-7492 (LKQE…KDDK), 7493-7508 (LKQE…KDDK), 7509-7524 (LKQD…KDDK), 7525-7540 (LKQE…KDDK), 7541-7556 (LKHE…KDDK), 7557-7572 (LKQE…KDDK), 7573-7588 (LKQD…KDDK), 7589-7604 (LKHE…KDDN), 7605-7620 (FKQE…KDDK), 7621-7628 (LKQEKDDN), 7629-7644 (FKQE…KDDK), 7645-7652 (LKQEKDDK), 7653-7668 (LKQE…KDDK), 7669-7684 (LKQE…KDDK), 7685-7700 (LKQE…KDDK), 7701-7716 (LKQE…KDDK), 7717-7732 (LKQE…KDDK), 7733-7748 (LKQE…KDDK), 7749-7764 (LKQE…KDDK), 7765-7772 (LKQEKNDK), 7773-7788 (LKQE…KDDK), 7789-7804 (LKQE…KDDK), 7805-7820 (LKQE…KDDK), 7821-7836 (LKQE…KDDK), 7837-7852 (LKQE…KDDK), 7853-7868 (LKQE…KDNK), 7869-7884 (LKQE…KDNK), 7885-7900 (LKQE…KDDK), 7901-7916 (LKQE…KDDK), 7917-7932 (LKQE…KDDK), 7933-7948 (LKQE…KDDK), 7949-7964 (LKQE…KDDK), 7965-7980 (LKQE…KDDK), 7981-7996 (LKQE…KDDK), 7997-8012 (LKQE…KDDK), 8013-8028 (LKQE…KDDK), 8029-8044 (LKQE…KDDK), 8045-8060 (LKQE…KDDN), 8061-8076 (FKQE…KDDK), 8077-8084 (LKQEKDDK), 8085-8100 (LKQE…KDDK), 8101-8116 (LKQE…KDDK), 8117-8132 (LKQE…KDDK), 8133-8148 (LKQE…KDDK), 8149-8164 (LKQE…KDDK), 8165-8180 (LKQE…KDDK), 8181-8196 (LKQE…KDDK), 8197-8212 (LKQE…KDDK), 8213-8228 (LKQE…KDDK), 8229-8244 (LKQE…KDDK), 8245-8260 (LKQE…KDDK), 8261-8276 (LKQE…KDDK), 8277-8292 (LKQE…KDDK), 8293-8308 (LKQE…KDNK), 8309-8324 (LKQE…KDNK), 8325-8340 (LKQE…KDDK), 8341-8356 (LKQE…KDDK), 8357-8371 (LKQE…EKDD), 8373-8388 (LKQE…KDDK), 8389-8404 (LKQE…KDDK), 8405-8420 (LKQE…KDDK), 8421-8436 (LKQE…KDDK), 8437-8452 (LKQE…KDDK), 8453-8468 (LKQE…KDDK), and 8469-8484 (LKQE…KGDK). Residues 7876 to 8273 (KLKKEKDNKL…EADAKLKKDK (398 aa)) adopt a coiled-coil conformation. The stretch at 8316-8490 (KLKKEKDNKL…KGDKLKLEDQ (175 aa)) forms a coiled coil. Basic residues predominate over residues 8599 to 8611 (KHLKKKKKHHKKE). The segment at 8599–8626 (KHLKKKKKHHKKEKIAVKETEQDEKTVS) is disordered. Residues 8612-8626 (KIAVKETEQDEKTVS) show a composition bias toward basic and acidic residues. The Fibronectin type-III 1 domain maps to 8950-9041 (KPRKAQLVAL…EIIEVNTLDY (92 aa)). 20 disordered regions span residues 9079 to 9104 (IEEH…LDSE), 9147 to 9436 (VQKI…AAAE), 9481 to 9609 (EEQS…ETES), 9702 to 10224 (ADAV…ESRI), 10239 to 10274 (ESDD…EDSP), 10539 to 11018 (QSAP…DSFT), 11030 to 11111 (EDAV…QKDQ), 11123 to 11213 (KKLA…QDKT), 11225 to 11387 (AKTT…SLTS), 11420 to 11592 (KGLN…NPEL), 11624 to 11825 (LTKK…SDNL), 11872 to 11955 (LSAH…TSLS), 11996 to 12054 (TNLI…LQKN), 12397 to 12418 (GRRV…RKKR), 12537 to 12974 (EESR…PAES), 13026 to 13045 (EAAK…TEVV), 13065 to 13261 (AAEA…LNDK), 13283 to 13514 (QAQA…EQLK), 13553 to 13574 (EEKQ…KLKL), and 13594 to 13874 (EKLA…RRTG). The span at 9084 to 9093 (KLKKKSKKSK) shows a compositional bias: basic residues. 2 stretches are compositionally biased toward basic and acidic residues: residues 9172-9184 (VKKD…KKSL) and 9191-9202 (TKKEIQGKPEKK). Residues 9213–9231 (SSISETSETLTKDLTQTKQ) are compositionally biased toward polar residues. Residues 9232–9267 (SEPEPAKRTTETSVQDEVKRKTETTSKSKQTTEEHP) are compositionally biased toward basic and acidic residues. Positions 9273–9283 (SDSSISSTSDA) are enriched in low complexity. The segment covering 9295–9332 (EAQKVTEKPETAKLESKSKMTEDTTKESDNKETVDEKP) has biased composition (basic and acidic residues). The span at 9346-9359 (STISETSETSAVES) shows a compositional bias: low complexity. The stretch at 9371–9510 (AAVDKEKKQK…QTKAKAAEKQ (140 aa)) forms a coiled coil. Basic and acidic residues-rich tracts occupy residues 9373-9436 (VDKE…AAAE) and 9481-9521 (EEQS…KSNK). A compositionally biased stretch (low complexity) spans 9547–9558 (SSISQKSDTSKT). Positions 9577–9749 (TSKQKETDKK…QTVEEQAKLD (173 aa)) form a coiled coil. Composition is skewed to basic and acidic residues over residues 9578 to 9609 (SKQK…ETES) and 9702 to 9783 (ADAV…DEKP). The segment covering 9798–9809 (SISQKSVTSKTV) has biased composition (polar residues). 3 stretches are compositionally biased toward basic and acidic residues: residues 9819–10004 (ETQK…DEKP), 10040–10149 (ETQK…KSEN), and 10162–10196 (VKSE…EPKE). 2 coiled-coil regions span residues 9822 to 9995 (KVAD…TEEA) and 10046 to 10129 (EADK…TSKK). Positions 10197–10206 (KKKIIKKKKD) are enriched in basic residues. Positions 10207–10224 (TTKPQEASKELSSDESRI) are enriched in basic and acidic residues. A compositionally biased stretch (polar residues) spans 10239–10250 (ESDDLSTASTIK). One can recognise a Fibronectin type-III 2 domain in the interval 10461–10553 (KPTSLQVTST…DTIEATTQAE (93 aa)). Over residues 10566–10609 (EKVKEPVSKKPENTKESEGHKKRDRKESEDHDENNLGKSGKDEF) the composition is skewed to basic and acidic residues. Polar residues predominate over residues 10612–10637 (SGESGTSNQNEESAQLNTSFTSTEQH). Residues 10663 to 10680 (IDADVVEVEYDEQGDDIP) show a composition bias toward acidic residues. A compositionally biased stretch (basic and acidic residues) spans 10707-10716 (MAEKDSDAME). Polar residues predominate over residues 10779–10790 (ADQTGMSIQDLN). Composition is skewed to basic and acidic residues over residues 10840–10852 (QLDK…DDKM) and 10863–10884 (KKPE…KESD). Positions 10961 to 10975 (LSTSEQVENASQNLG) are enriched in polar residues. 3 stretches are compositionally biased toward basic and acidic residues: residues 10999–11009 (IHGEAESKLGE), 11045–11055 (SAEKTSLEVRD), and 11076–11089 (SNRD…RDLN). Residues 11018–11064 (TLQDLYEELKAKEDAVEAGAETSNADQSAEKTSLEVRDMKKKMKKKQ) are a coiled coil. Over residues 11090-11108 (TQHSNQTGEDESSTFNFGQ) the composition is skewed to polar residues. A compositionally biased stretch (basic and acidic residues) spans 11159–11173 (KKGEENEKTKFEAKH). Positions 11174-11187 (LGSSSASDSLAEST) are enriched in low complexity. 3 stretches are compositionally biased toward basic and acidic residues: residues 11195-11211 (KGEV…KNQD), 11271-11280 (IPDKNRDSDK), and 11295-11318 (ESAE…EKTL). The segment covering 11374-11387 (SKVTTSFADESLTS) has biased composition (polar residues). Composition is skewed to basic and acidic residues over residues 11440-11464 (KVKD…KDQK) and 11472-11485 (GSKD…EEKT). Positions 11503 to 11515 (MTDQKNVQESQYA) are enriched in polar residues. 3 stretches are compositionally biased toward basic and acidic residues: residues 11624-11635 (LTKKQDENDAKK), 11645-11669 (AKKD…DSRE), and 11722-11735 (VSEK…EKTV). Polar residues predominate over residues 11754-11767 (ESLNASSALSTTDV). The segment covering 11916–11937 (AEDKYVESRKKTTLKKKPEQKQ) has biased composition (basic and acidic residues). Residues 12408-12428 (ELDDAKKRKKRRIKRVVERRN) adopt a coiled-coil conformation. Residues 12432-12547 (PRLTQLIPPR…ESRDDDKSVD (116 aa)) form the Ig-like 12 domain. Basic and acidic residues-rich tracts occupy residues 12537–12547 (EESRDDDKSVD), 12555–12567 (LEEK…DKSK), and 12609–12689 (VGAK…KKDA). Low complexity predominate over residues 12690–12701 (SQPSSSKESSPP). A compositionally biased stretch (polar residues) spans 12729–12740 (TMHSETNITTTI). Composition is skewed to basic and acidic residues over residues 12766–12839 (ESAK…KNKS), 12852–12865 (ETKK…EVPK), and 12889–12940 (PADD…DDKS). A coiled-coil region spans residues 12797–12828 (KKSEKKDEVTAEKQSTEALIESKKKEVDESKI). Residues 12980-13103 (AEVNKAKKQK…LKLEEESAAK (124 aa)) are a coiled coil. Basic and acidic residues-rich tracts occupy residues 13065-13124 (AAEA…KAGE), 13133-13145 (PTSK…KDVG), 13176-13191 (TDSE…DEPT), 13203-13261 (EADK…LNDK), 13283-13327 (QAQA…EKQA), 13337-13354 (AVKK…EANK), and 13361-13416 (LKIE…DEKP). Positions 13237–13380 (LDAQEKIKKV…SKQTVEEQAK (144 aa)) form a coiled coil. Polar residues predominate over residues 13431-13442 (SISQKSETSKTV). Residues 13452–13514 (ETQKVADAAR…KQKEKDEQLK (63 aa)) are compositionally biased toward basic and acidic residues. The stretch at 13455 to 13628 (KVADAARKQK…ETKSKQTEEA (174 aa)) forms a coiled coil. Residues 13594–13637 (EKLAQEQSRLEDEAKKSAEKQKLESETKSKQTEEAPKESVDEKP) are compositionally biased toward basic and acidic residues. Low complexity predominate over residues 13651–13662 (SSISQKSKSAKS). A compositionally biased stretch (polar residues) spans 13684 to 13696 (KVEQSPDESTSAT). Residues 13697 to 13735 (IKRDPAQKTEEISKQDDGDEKKTTTDGKPPKPEDSEATP) show a composition bias toward basic and acidic residues. Residues 13747–13760 (SDSVASDASLADVS) show a composition bias toward low complexity. The span at 13761-13770 (KLSDDVEEKP) shows a compositional bias: basic and acidic residues. Residues 13784-13793 (SVISETSSVD) show a composition bias toward polar residues. 2 stretches are compositionally biased toward basic and acidic residues: residues 13795–13808 (IKPE…EKAE) and 13824–13843 (SEPK…DMMT). Residues 13963–14036 (PVDFVKYLPR…RAKYEDSGKY (74 aa)) form the Ig-like 13 domain. 3 Fibronectin type-III domains span residues 14153-14247 (APGD…TGSP), 14253-14348 (VEFP…TVEG), and 14350-14448 (VPEI…VLAD). 3 consecutive Ig-like domains span residues 14451 to 14542 (PRVL…VGIS), 14550 to 14634 (SSFS…VIVN), and 14638 to 14727 (PHIL…LVFE). Cys-14568 and Cys-14618 form a disulfide bridge. Fibronectin type-III domains are found at residues 14826–14920 (APCD…TLES) and 14937–15027 (ILRT…LVPG). The interval 15011–15180 (VSSPSEETNP…TGKETTEKKK (170 aa)) is disordered. Basic and acidic residues-rich tracts occupy residues 15034–15060 (KTEK…EKQV) and 15085–15117 (KVAE…ESRR). Positions 15118 to 15132 (GSLQASSDNESVTTT) are enriched in polar residues. Positions 15133–15177 (SEKRSEAELEKNSEKSAEKKSTSADLEAADKAETEKSETGKETTE) are enriched in basic and acidic residues. Ig-like domains follow at residues 15180 to 15274 (KKVV…VSIA) and 15283 to 15371 (PKVE…IALR). Fibronectin type-III domains follow at residues 15383–15475 (PTGP…LKKK) and 15503–15596 (QIGK…TTES). The interval 15470–15503 (TTLKKKEETGKQKSEKSESDEKKSESDKVSELKQ) is disordered. Positions 15473-15503 (KKKEETGKQKSEKSESDEKKSESDKVSELKQ) are enriched in basic and acidic residues. Ig-like domains lie at 15599–15687 (PAFT…CKLT) and 15692–15786 (PEIN…IQVT). One can recognise a Fibronectin type-III 10 domain in the interval 15791-15883 (APGKPAVEDQ…DESELVVVKN (93 aa)). Residues 15934–16189 (YIIHEELGKG…VQDALRHPWI (256 aa)) form the Protein kinase domain. ATP is bound by residues 15940-15948 (LGKGAYGTV) and Lys-15963. The active-site Proton acceptor is Asp-16055. Residues 16206-16264 (KMQPKLDKSGVPARQKRNFLSLKRWSDDLLPIGRLAKRGAIFRRLTMDGVFERNIAFDT) are autoinhibitory domain. Ig-like domains lie at 16268-16358 (PSVK…AKLS), 16500-16575 (GKQL…VAKN), 16605-16692 (PRFR…FSVV), and 16705-16789 (PKFL…KDFT). 4 cysteine pairs are disulfide-bonded: Cys-16290–Cys-16342, Cys-16508–Cys-16571, Cys-16627–Cys-16677, and Cys-16726–Cys-16778. The segment at 16805-16827 (LTPVRSRSRSRSRSPSVVGGEIQ) is disordered. 3 Ig-like domains span residues 16829–16918 (PPVV…AIVV), 16932–17025 (PTFV…LTIS), and 17037–17126 (PYFI…TEVS). Residues 17121 to 17169 (QNTEVSVTKSKEVKEKKEKKKVEKKDEGKKKPGRPGLPRPSGASKTEQV) are disordered. Residues 17129-17150 (KSKEVKEKKEKKKVEKKDEGKK) show a composition bias toward basic and acidic residues. Residues 17154–17245 (RPGLPRPSGA…MTSTLKTASV (92 aa)) form the Fibronectin type-III 11 domain. Ig-like domains lie at 17249–17336 (PQFT…CQVT), 17358–17447 (PTLQ…CNVA), 17457–17548 (PSFS…VMIA), 17570–17661 (PRFT…TQVI), 17676–17765 (PKFT…QATT), 17782–17873 (PRFV…LNVS), 18008–18097 (PKFM…SEID), 18121–18213 (PNFI…LQVS), 18224–18316 (PPLF…MQLD), 18329–18417 (PRVF…LELT), and 18429–18519 (PKFN…MILS). 2 disulfides stabilise this stretch: Cys-17379/Cys-17431 and Cys-17478/Cys-17530. The cysteines at positions 17697 and 17754 are disulfide-linked. A disulfide bond links Cys-18143 and Cys-18195.

The protein belongs to the protein kinase superfamily. CAMK Ser/Thr protein kinase family. Interacts (via C-terminus) with myosin. Interacts with actin. The cofactor is Mg(2+). Expression is restricted to body wall, enteric and vulval muscles.

The protein localises to the cytoplasm. It localises to the myofibril. It is found in the sarcomere. The protein resides in the a band. Its subcellular location is the i band. The protein localises to the nucleus membrane. It carries out the reaction L-seryl-[protein] + ATP = O-phospho-L-seryl-[protein] + ADP + H(+). The catalysed reaction is L-threonyl-[protein] + ATP = O-phospho-L-threonyl-[protein] + ADP + H(+). Serine/threonine-protein kinase. Key component in the assembly and functioning of muscles. By providing connections at the level of individual microfilaments, it contributes to the fine balance of forces between the two halves of the sarcomere. The size and extensibility of the cross-links are the main determinants of sarcomere extensibility properties of muscle. In non-muscle cells, seems to play a role in chromosome condensation and chromosome segregation during mitosis. Might link the lamina network to chromatin or nuclear actin, or both during interphase. The sequence is that of Titin homolog from Caenorhabditis elegans.